A 382-amino-acid polypeptide reads, in one-letter code: D-galactonate dehydratase (382 aa).

Asp183 lines the Mg(2+) pocket. The active-site Proton donor is the His185. 2 residues coordinate Mg(2+): Glu209 and Glu235. The active-site Proton acceptor is His285. Positions 361–382 are disordered; the sequence is NENPPDWRNPVWRHSDGSIAEW.

The protein belongs to the mandelate racemase/muconate lactonizing enzyme family. GalD subfamily. Requires Mg(2+) as cofactor.

It catalyses the reaction D-galactonate = 2-dehydro-3-deoxy-D-galactonate + H2O. It participates in carbohydrate acid metabolism; D-galactonate degradation; D-glyceraldehyde 3-phosphate and pyruvate from D-galactonate: step 1/3. Functionally, catalyzes the dehydration of D-galactonate to 2-keto-3-deoxy-D-galactonate. In Xanthomonas axonopodis pv. citri (strain 306), this protein is D-galactonate dehydratase.